A 283-amino-acid polypeptide reads, in one-letter code: Phosphatidylserine decarboxylase proenzyme (283 aa).

Catalysis depends on charge relay system; for autoendoproteolytic cleavage activity residues D96, H152, and S250. S250 (schiff-base intermediate with substrate; via pyruvic acid; for decarboxylase activity) is an active-site residue. Position 250 is a pyruvic acid (Ser); by autocatalysis (S250).

The protein belongs to the phosphatidylserine decarboxylase family. PSD-B subfamily. Prokaryotic type I sub-subfamily. Heterodimer of a large membrane-associated beta subunit and a small pyruvoyl-containing alpha subunit. Pyruvate serves as cofactor. Is synthesized initially as an inactive proenzyme. Formation of the active enzyme involves a self-maturation process in which the active site pyruvoyl group is generated from an internal serine residue via an autocatalytic post-translational modification. Two non-identical subunits are generated from the proenzyme in this reaction, and the pyruvate is formed at the N-terminus of the alpha chain, which is derived from the carboxyl end of the proenzyme. The autoendoproteolytic cleavage occurs by a canonical serine protease mechanism, in which the side chain hydroxyl group of the serine supplies its oxygen atom to form the C-terminus of the beta chain, while the remainder of the serine residue undergoes an oxidative deamination to produce ammonia and the pyruvoyl prosthetic group on the alpha chain. During this reaction, the Ser that is part of the protease active site of the proenzyme becomes the pyruvoyl prosthetic group, which constitutes an essential element of the active site of the mature decarboxylase.

It is found in the cell membrane. It catalyses the reaction a 1,2-diacyl-sn-glycero-3-phospho-L-serine + H(+) = a 1,2-diacyl-sn-glycero-3-phosphoethanolamine + CO2. Its pathway is phospholipid metabolism; phosphatidylethanolamine biosynthesis; phosphatidylethanolamine from CDP-diacylglycerol: step 2/2. Functionally, catalyzes the formation of phosphatidylethanolamine (PtdEtn) from phosphatidylserine (PtdSer). This chain is Phosphatidylserine decarboxylase proenzyme, found in Acinetobacter baumannii (strain AB0057).